A 750-amino-acid chain; its full sequence is Meiosis protein mei2 (750 aa).

The interval 1–20 (MIMETESPLSITSPSPSDST) is disordered. Residues 7 to 20 (SPLSITSPSPSDST) show a composition bias toward polar residues. RRM domains are found at residues 195–270 (RYLF…FCQR) and 293–361 (LLLN…CLQV).

In terms of assembly, binds rad24 when phosphorylated. In terms of processing, inactivated by phosphorylation by ran1/pat1.

In terms of biological role, crucial for commitment to meiosis but it is not sufficient itself for the commitment. May be a splicing regulator. In Schizosaccharomyces pombe (strain 972 / ATCC 24843) (Fission yeast), this protein is Meiosis protein mei2 (mei2).